The following is a 409-amino-acid chain: Type II methyltransferase M.BsuFI (409 aa).

Positions 101 to 402 (LTFIDLFAGI…GAMKERLLLA (302 aa)) constitute an SAM-dependent MTase C5-type domain. C170 is an active-site residue.

The protein belongs to the class I-like SAM-binding methyltransferase superfamily. C5-methyltransferase family.

It carries out the reaction a 2'-deoxycytidine in DNA + S-adenosyl-L-methionine = a 5-methyl-2'-deoxycytidine in DNA + S-adenosyl-L-homocysteine + H(+). A methylase, recognizes the double-stranded sequence 5'-CCGG-3', methylates C-1 on both strands, and protects the DNA from cleavage by the BsuFI endonuclease. The chain is Type II methyltransferase M.BsuFI (hsdFM) from Bacillus subtilis.